The sequence spans 154 residues: SsrA-binding protein (154 aa).

This sequence belongs to the SmpB family.

It is found in the cytoplasm. Required for rescue of stalled ribosomes mediated by trans-translation. Binds to transfer-messenger RNA (tmRNA), required for stable association of tmRNA with ribosomes. tmRNA and SmpB together mimic tRNA shape, replacing the anticodon stem-loop with SmpB. tmRNA is encoded by the ssrA gene; the 2 termini fold to resemble tRNA(Ala) and it encodes a 'tag peptide', a short internal open reading frame. During trans-translation Ala-aminoacylated tmRNA acts like a tRNA, entering the A-site of stalled ribosomes, displacing the stalled mRNA. The ribosome then switches to translate the ORF on the tmRNA; the nascent peptide is terminated with the 'tag peptide' encoded by the tmRNA and targeted for degradation. The ribosome is freed to recommence translation, which seems to be the essential function of trans-translation. This chain is SsrA-binding protein, found in Treponema pallidum (strain Nichols).